A 187-amino-acid polypeptide reads, in one-letter code: MKLLLLCLGLILVCAQQEENSDVAIRNFDISKISGEWYSIFLASDVKEKIEENGSMRVFVDVIRALDNSSLYAEYQTKVNGECTEFPMVFDKTEEDGVYSLNYDGYNVFRISEFENDEHIILYLVNFDKDRPFQLFEFYAREPDVSPEIKEEFVKIVQKRGIVKENIIDLTKIDRCFQLRGNGVAQA.

Residues 1–15 (MKLLLLCLGLILVCA) constitute a signal peptide (or 16, or 21). N-linked (GlcNAc...) asparagine glycans are attached at residues asparagine 53 and asparagine 68. The cysteines at positions 83 and 176 are disulfide-linked.

Belongs to the calycin superfamily. Lipocalin family. Homodimer. Several N-terminal ends may be due to cleavage by signal peptidase at different sites or may be generated by proteolytic processing of the secreted protein. In terms of processing, analysis of the sugar composition shows the presence of GalNAc, Gal, NeuAc, GlcNAc, and Man. May be also O-glycosylated. Expressed in liver and in sublingual and submaxillary salivary glands. Highly concentrated in secretory fluid such as saliva and urine as well as in hair dandruff extract.

Its subcellular location is the secreted. The polypeptide is Major allergen Equ c 1 (Equus caballus (Horse)).